The sequence spans 240 residues: Uridylate kinase (240 aa).

Residue 13 to 16 (KFSG) coordinates ATP. Glycine 55 is a UMP binding site. Residues glycine 56 and arginine 60 each coordinate ATP. Residues aspartate 76 and 137–144 (TGNPFFTT) each bind UMP. Threonine 164, tyrosine 170, and aspartate 173 together coordinate ATP.

The protein belongs to the UMP kinase family. Homohexamer.

Its subcellular location is the cytoplasm. It catalyses the reaction UMP + ATP = UDP + ADP. It functions in the pathway pyrimidine metabolism; CTP biosynthesis via de novo pathway; UDP from UMP (UMPK route): step 1/1. With respect to regulation, inhibited by UTP. Functionally, catalyzes the reversible phosphorylation of UMP to UDP. This chain is Uridylate kinase, found in Helicobacter pylori (strain J99 / ATCC 700824) (Campylobacter pylori J99).